Here is a 281-residue protein sequence, read N- to C-terminus: Nucleotide-binding protein CTN_0898 (281 aa).

Glycine 9–threonine 16 is a binding site for ATP. Aspartate 58–serine 61 lines the GTP pocket.

It belongs to the RapZ-like family.

Displays ATPase and GTPase activities. This Thermotoga neapolitana (strain ATCC 49049 / DSM 4359 / NBRC 107923 / NS-E) protein is Nucleotide-binding protein CTN_0898.